The sequence spans 109 residues: ATP-dependent Clp protease adapter protein ClpS (109 aa).

A disordered region spans residues 1–21 (MAERKQGGQNNGAGSSVITEV).

This sequence belongs to the ClpS family. As to quaternary structure, binds to the N-terminal domain of the chaperone ClpA.

Functionally, involved in the modulation of the specificity of the ClpAP-mediated ATP-dependent protein degradation. The chain is ATP-dependent Clp protease adapter protein ClpS from Caulobacter sp. (strain K31).